The primary structure comprises 292 residues: NAD kinase (292 aa).

Catalysis depends on Asp73, which acts as the Proton acceptor. NAD(+) is bound by residues 73–74 (DG), 147–148 (NE), His158, Arg175, Asp177, 188–193 (TAYSLS), and Gln247.

This sequence belongs to the NAD kinase family. It depends on a divalent metal cation as a cofactor.

It is found in the cytoplasm. The catalysed reaction is NAD(+) + ATP = ADP + NADP(+) + H(+). Involved in the regulation of the intracellular balance of NAD and NADP, and is a key enzyme in the biosynthesis of NADP. Catalyzes specifically the phosphorylation on 2'-hydroxyl of the adenosine moiety of NAD to yield NADP. This Serratia proteamaculans (strain 568) protein is NAD kinase.